A 138-amino-acid polypeptide reads, in one-letter code: Isochorismatase-like protein asqB (138 aa).

Belongs to the isochorismatase family.

It catalyses the reaction [(1'E)-5'-(3',3'-dimethyloxiran-2'-yl)-3'-hydroxy-3'-methylpent-1'-en-1'-yl]-quinolinone B = yaequinolone C. It participates in secondary metabolite biosynthesis. Its pathway is alkaloid biosynthesis. The protein operates within mycotoxin biosynthesis. Its function is as follows. Isochorismatase-like protein; part of the gene cluster that mediates the biosynthesis of the aspoquinolone mycotoxins. Within the pathway, asqB converts [(1'E)-5'-(3',3'-dimethyloxiran-2'-yl)-3'-hydroxy-3'-methylpent-1'-en-1'-yl]-quinolinone B into yaequinolone C. The first step of the pathway is catalyzed by the nonribosomal peptide synthetase asqK that condenses anthranilic acid and O-methyl-L-tyrosine to produce 4'-methoxycyclopeptin. 4'-methoxycyclopeptin is then converted to 4'-methoxydehydrocyclopeptin by the ketoglutarate-dependent dioxygenase asqJ. AsqJ also converts its first product 4'-methoxydehydrocyclopeptin to 4'-methoxycyclopenin. The following conversion of 4'-methoxycyclopenin into 4'-methoxyviridicatin is catalyzed by the cyclopenase asqI. 4'-methoxyviridicatin is the precursor of quinolone natural products, and is further converted to quinolinone B. The prenyltransferase asqH1 then catalyzes the canonical Friedel-Crafts alkylation of quinolinone B with dimethylallyl cation to yield dimethylallyl quinolone, which is subjected to FAD-dependent dehydrogenation by the FAD-linked oxidoreductase asqF to yield conjugated aryl diene. The delta(3') double bond then serves as the site of the second alkylation with DMAPP catalyzed by the prenyltransferase asqH2 to yield a carbenium ion intermediate, which can be attacked by H(2)O to yield a styrenyl quinolone containing a C3'-hydroxyprenyl chain. The FAD-dependent monooxygenase asqG performs epoxidation of the terminal C7'-C8' olefin. Finally, after dehydratation of the epoxide at C3 by asqC, the quinolone epoxide rearrangement protein asqO catalyzes an enzymatic 3-exo-tet cyclization to yield the cyclopropyl-THF ring system in aspoquinolone. The sequence is that of Isochorismatase-like protein asqB from Emericella nidulans (strain FGSC A4 / ATCC 38163 / CBS 112.46 / NRRL 194 / M139) (Aspergillus nidulans).